The chain runs to 751 residues: ABC transporter G family member 22 (751 aa).

Residues 26–81 (ADIRSPHGSMDANGVPATAPAAVGGGGTLSRKSSRRLMGMSPGRSSGAGTHIRKSR) are disordered. Residues 157 to 403 (LKFRDVTYKV…FSSIGCSPLI (247 aa)) enclose the ABC transporter domain. Position 197-204 (197-204 (GPSGSGKT)) interacts with ATP. The ABC transmembrane type-2 domain occupies 498–707 (EQYCILFCRG…TYKLLLKVQY (210 aa)). The next 6 helical transmembrane spans lie at 516–536 (FSWL…LLWW), 552–572 (LLFF…IFAF), 602–622 (LPLD…MTGL), 634–654 (LTVF…GAIL), 666–686 (VTVM…PVFI), and 722–742 (GLTE…LAYL).

Belongs to the ABC transporter superfamily. ABCG family. Eye pigment precursor importer (TC 3.A.1.204) subfamily.

It localises to the membrane. The polypeptide is ABC transporter G family member 22 (ABCG22) (Arabidopsis thaliana (Mouse-ear cress)).